Here is a 595-residue protein sequence, read N- to C-terminus: Aspartate--tRNA ligase (595 aa).

Glu173 is an L-aspartate binding site. The segment at 197 to 200 (QLFK) is aspartate. Position 219 (Arg219) interacts with L-aspartate. ATP-binding positions include 219 to 221 (RDE) and Gln228. His449 provides a ligand contact to L-aspartate. Residue Glu483 coordinates ATP. Arg490 is an L-aspartate binding site. 535-538 (GLDR) is an ATP binding site.

This sequence belongs to the class-II aminoacyl-tRNA synthetase family. Type 1 subfamily. Homodimer.

Its subcellular location is the cytoplasm. It catalyses the reaction tRNA(Asp) + L-aspartate + ATP = L-aspartyl-tRNA(Asp) + AMP + diphosphate. Functionally, catalyzes the attachment of L-aspartate to tRNA(Asp) in a two-step reaction: L-aspartate is first activated by ATP to form Asp-AMP and then transferred to the acceptor end of tRNA(Asp). This Shewanella sediminis (strain HAW-EB3) protein is Aspartate--tRNA ligase.